Reading from the N-terminus, the 60-residue chain is Protein translocase subunit SecE (60 aa).

A helical membrane pass occupies residues 37 to 57 (LLGFALVGGIGYLIHLGYIIL).

This sequence belongs to the SecE/SEC61-gamma family. As to quaternary structure, component of the Sec protein translocase complex. Heterotrimer consisting of SecY (alpha), SecG (beta) and SecE (gamma) subunits. The heterotrimers can form oligomers, although 1 heterotrimer is thought to be able to translocate proteins. Interacts with the ribosome. May interact with SecDF, and other proteins may be involved.

It is found in the cell membrane. Functionally, essential subunit of the Sec protein translocation channel SecYEG. Clamps together the 2 halves of SecY. May contact the channel plug during translocation. This Aeropyrum pernix (strain ATCC 700893 / DSM 11879 / JCM 9820 / NBRC 100138 / K1) protein is Protein translocase subunit SecE.